The primary structure comprises 53 residues: uncharacterized protein (53 aa).

It localises to the plastid. It is found in the chloroplast. This is an uncharacterized protein from Guillardia theta (Cryptophyte).